The following is a 429-amino-acid chain: Glutamate-1-semialdehyde 2,1-aminomutase 1 (429 aa).

Lys-268 is modified (N6-(pyridoxal phosphate)lysine).

Belongs to the class-III pyridoxal-phosphate-dependent aminotransferase family. HemL subfamily. Homodimer. Pyridoxal 5'-phosphate serves as cofactor.

Its subcellular location is the cytoplasm. The enzyme catalyses (S)-4-amino-5-oxopentanoate = 5-aminolevulinate. Its pathway is porphyrin-containing compound metabolism; protoporphyrin-IX biosynthesis; 5-aminolevulinate from L-glutamyl-tRNA(Glu): step 2/2. The chain is Glutamate-1-semialdehyde 2,1-aminomutase 1 from Listeria welshimeri serovar 6b (strain ATCC 35897 / DSM 20650 / CCUG 15529 / CIP 8149 / NCTC 11857 / SLCC 5334 / V8).